The primary structure comprises 190 residues: Translation initiation factor IF-3 (190 aa).

This sequence belongs to the IF-3 family. In terms of assembly, monomer.

Its subcellular location is the cytoplasm. IF-3 binds to the 30S ribosomal subunit and shifts the equilibrium between 70S ribosomes and their 50S and 30S subunits in favor of the free subunits, thus enhancing the availability of 30S subunits on which protein synthesis initiation begins. The protein is Translation initiation factor IF-3 of Prochlorococcus marinus (strain MIT 9301).